We begin with the raw amino-acid sequence, 348 residues long: Probable dual-specificity RNA methyltransferase RlmN (348 aa).

The active-site Proton acceptor is glutamate 93. One can recognise a Radical SAM core domain in the interval 99–333 (TEKRLTACLS…VSLRKSRGLD (235 aa)). A disulfide bridge connects residues cysteine 106 and cysteine 338. Residues cysteine 113, cysteine 117, and cysteine 120 each contribute to the [4Fe-4S] cluster site. S-adenosyl-L-methionine-binding positions include 160-161 (GE), serine 190, 219-221 (SLH), and asparagine 295. The S-methylcysteine intermediate role is filled by cysteine 338.

This sequence belongs to the radical SAM superfamily. RlmN family. Requires [4Fe-4S] cluster as cofactor.

Its subcellular location is the cytoplasm. The enzyme catalyses adenosine(2503) in 23S rRNA + 2 reduced [2Fe-2S]-[ferredoxin] + 2 S-adenosyl-L-methionine = 2-methyladenosine(2503) in 23S rRNA + 5'-deoxyadenosine + L-methionine + 2 oxidized [2Fe-2S]-[ferredoxin] + S-adenosyl-L-homocysteine. It carries out the reaction adenosine(37) in tRNA + 2 reduced [2Fe-2S]-[ferredoxin] + 2 S-adenosyl-L-methionine = 2-methyladenosine(37) in tRNA + 5'-deoxyadenosine + L-methionine + 2 oxidized [2Fe-2S]-[ferredoxin] + S-adenosyl-L-homocysteine. In terms of biological role, specifically methylates position 2 of adenine 2503 in 23S rRNA and position 2 of adenine 37 in tRNAs. The polypeptide is Probable dual-specificity RNA methyltransferase RlmN (Prochlorococcus marinus (strain AS9601)).